Here is a 143-residue protein sequence, read N- to C-terminus: Cofilin/actin-depolymerizing factor homolog 2 (143 aa).

Positions 4–141 (GVKVSDECVY…FEDELRTIIL (138 aa)) constitute an ADF-H domain.

Belongs to the actin-binding proteins ADF family. Interacts with monomeric actin, does not bind to actin polymers.

The protein localises to the cytoplasm. It localises to the cytoskeleton. Not involved in actin polymerisation, instead functions to stimulate nucleotide exchange on monomeric actin and influence turnover of the small amount of cytosolic actin microfilaments. Essential for erythrocytic schizogony. This Plasmodium falciparum (isolate 3D7) protein is Cofilin/actin-depolymerizing factor homolog 2.